Reading from the N-terminus, the 225-residue chain is Reticulon-like protein B9 (225 aa).

The 186-residue stretch at 39-224 (VADILLWREP…PRGTVKNKKF (186 aa)) folds into the Reticulon domain. Transmembrane regions (helical) follow at residues 50 to 70 (IAATLVIGVSILWFLMEVVEY), 72 to 92 (FITLICHASMTSMLFFFIWST), and 152 to 172 (YIVSIIGTYFNFVNLLFIGFV).

Its subcellular location is the endoplasmic reticulum membrane. This chain is Reticulon-like protein B9 (RTNLB9), found in Arabidopsis thaliana (Mouse-ear cress).